A 196-amino-acid polypeptide reads, in one-letter code: Large ribosomal subunit protein uL6 (196 aa).

This sequence belongs to the universal ribosomal protein uL6 family. Part of the 50S ribosomal subunit.

Its function is as follows. This protein binds to the 23S rRNA, and is important in its secondary structure. It is located near the subunit interface in the base of the L7/L12 stalk, and near the tRNA binding site of the peptidyltransferase center. The chain is Large ribosomal subunit protein uL6 from Pyrobaculum aerophilum (strain ATCC 51768 / DSM 7523 / JCM 9630 / CIP 104966 / NBRC 100827 / IM2).